Here is a 520-residue protein sequence, read N- to C-terminus: MNVGSILNDDPPSSGNANGNDDNTKIIKSPTAYHKPSVHERHSITSMLNDTPSDSTPTKKPEPTISPEFRKPSISSLTSPSVAHKPPPLPPSSSSVGSSEHSSARSSPAITKRNSIANIIDAYEEPATKTEKKAELNSPKINQSTPVPKLEEHENDTNKVEKVVDSAPEPKPKKEPQPVFDDQDDDLTKIKKLKQSKKPRRYETPPIWAQRWVPPNRQKEETNVDDGNEAITRLSEKPVFDYTTTRSVDLECSITGMIPPSSITRKIAEWVYANFSNVEEKSKRNVELELKFGKIIDKRSGNRIDLNVVTECIFTDHSSVFFDMQVEEVAWKEITKFLDELEKSFQEGKKGRKFKTLESDNTDSFYQLGRKGEHPKRIRVTKDNLLSPPRLVAIQKERVADLYIHNPGSLFDLRLSMSLEIPVPQGNIESIITKNKPEMVREKKRISYTHPPTITKFDLTRVIGNKTEDKYEVELEAGVMEIFAAIDKIQKGVDNLRLEELIEVFLNNARTLNNRLNKIC.

The disordered stretch occupies residues 1–185 (MNVGSILNDD…PQPVFDDQDD (185 aa)). Polar residues-rich tracts occupy residues 11–21 (PPSSGNANGND) and 44–56 (ITSM…SDST). The segment covering 92-108 (SSSSVGSSEHSSARSSP) has biased composition (low complexity). 2 stretches are compositionally biased toward basic and acidic residues: residues 126–135 (PATKTEKKAE) and 149–176 (KLEE…KKEP).

Belongs to the fungal TPase family. As to quaternary structure, heterodimer. The mRNA-capping enzyme is composed of two separate chains alpha and beta, respectively a mRNA guanylyltransferase and an mRNA 5'-triphosphate monophosphatase. Requires Mg(2+) as cofactor.

Its subcellular location is the nucleus. It catalyses the reaction a 5'-end triphospho-ribonucleoside in mRNA + H2O = a 5'-end diphospho-ribonucleoside in mRNA + phosphate + H(+). First step of mRNA capping. Converts the 5'-triphosphate end of a nascent mRNA chain into a diphosphate end. The polypeptide is mRNA-capping enzyme subunit beta (CET1) (Candida albicans (strain SC5314 / ATCC MYA-2876) (Yeast)).